We begin with the raw amino-acid sequence, 265 residues long: Phosphatidylglycerol--prolipoprotein diacylglyceryl transferase (265 aa).

The next 4 helical transmembrane spans lie at 17-37 (LSIR…WLLG), 56-76 (LVTY…MLFY), 92-112 (WQGG…VWFF), and 117-137 (GKGF…GLFA). A 1,2-diacyl-sn-glycero-3-phospho-(1'-sn-glycerol) is bound at residue Arg-139. 3 helical membrane passes run 173–193 (PSQL…VWLY), 201–221 (GAVS…VELV), and 235–255 (WLTM…WLLA).

It belongs to the Lgt family.

Its subcellular location is the cell inner membrane. It carries out the reaction L-cysteinyl-[prolipoprotein] + a 1,2-diacyl-sn-glycero-3-phospho-(1'-sn-glycerol) = an S-1,2-diacyl-sn-glyceryl-L-cysteinyl-[prolipoprotein] + sn-glycerol 1-phosphate + H(+). The protein operates within protein modification; lipoprotein biosynthesis (diacylglyceryl transfer). Its function is as follows. Catalyzes the transfer of the diacylglyceryl group from phosphatidylglycerol to the sulfhydryl group of the N-terminal cysteine of a prolipoprotein, the first step in the formation of mature lipoproteins. The protein is Phosphatidylglycerol--prolipoprotein diacylglyceryl transferase of Solidesulfovibrio magneticus (strain ATCC 700980 / DSM 13731 / RS-1) (Desulfovibrio magneticus).